A 289-amino-acid polypeptide reads, in one-letter code: 4-diphosphocytidyl-2-C-methyl-D-erythritol kinase (289 aa).

Residue K10 is part of the active site. 99–109 (PMGGGLGGGSS) lines the ATP pocket. D141 is a catalytic residue.

This sequence belongs to the GHMP kinase family. IspE subfamily. In terms of assembly, homodimer.

It carries out the reaction 4-CDP-2-C-methyl-D-erythritol + ATP = 4-CDP-2-C-methyl-D-erythritol 2-phosphate + ADP + H(+). Its pathway is isoprenoid biosynthesis; isopentenyl diphosphate biosynthesis via DXP pathway; isopentenyl diphosphate from 1-deoxy-D-xylulose 5-phosphate: step 3/6. Its function is as follows. Catalyzes the phosphorylation of the position 2 hydroxy group of 4-diphosphocytidyl-2C-methyl-D-erythritol. This is 4-diphosphocytidyl-2-C-methyl-D-erythritol kinase from Enterobacter sp. (strain 638).